The primary structure comprises 551 residues: MISPDPRPSPGLARWAESYEAKCERRQEIRESRRCRPNVTTCRQVGKTLRIQQREQLQRARLQQFFRRRNLELEEKGKAQHPQAREQGPSRRPGQVTVLKEPLSCARRISSPREQVTGTSSEVFPAQHPPPSGICRDLSDHLSSQAGGLPPQDTPIKKPPKHHRGTQTKAEGPTIKNDASQQTNYGVAVLDKEIIQLSDYLKEALQRELVLKQKMVILQDLLSTLIQASDSSWKGQLNEDKLKGKLRSLENQLYTCTQKYSPWGMKKVLLEMEDQKNSYEQKAKESLQKVLEEKMNAEQQLQSTQRSLALAEQKCEEWRSQYEALKEDWRTLGTQHRELESQLHVLQSKLQGADSRDLQMNQALRFLENEHQQLQAKIECLQGDRDLCSLDTQDLQDQLKRSEAEKLTLVTRVQQLQGLLQNQSLQLQEQEKLLTKKDQALPVWSPKSFPNEVEPEGTGKEKDWDLRDQLQKKTLQLQAKEKECRELHSELDNLSDEYLSCLRKLQHCREELNQSQQLPPRRQCGRWLPVLMVVIAAALAVFLANKDNLMI.

Residues 1–526 (MISPDPRPSP…QLPPRRQCGR (526 aa)) are Cytoplasmic-facing. Disordered regions lie at residues 73-95 (LEEK…RPGQ) and 140-178 (DHLS…IKND). 2 coiled-coil regions span residues 240–436 (DKLK…LLTK) and 464–506 (WDLR…RKLQ). A helical; Anchor for type IV membrane protein transmembrane segment spans residues 527 to 544 (WLPVLMVVIAAALAVFLA). Residues 545–551 (NKDNLMI) are Extracellular-facing.

As to quaternary structure, interacts (via its coiled-coil domain) with TRAF3 (via isoleucine zipper). Interacts with MAP2K1. Interacts with PPP2CA; this interaction targets PPP2CA to the lysosomes. Interacts with TLR4. Interacts with MAVS. Interacts with TBK1.

The protein resides in the cell membrane. It localises to the golgi apparatus membrane. Its subcellular location is the lysosome membrane. It is found in the mitochondrion outer membrane. Functionally, adapter protein that plays essential roles in both innate and adaptive immunity. Plays a crucial role in the regulation of thymocyte development. Mechanistically, mediates TCR-stimulated activation through recruiting MAP2K1/MEK1 to the Golgi and, thereby, facilitating the interaction of MAP2K1/MEK1 with its activator BRAF. Also plays an essential role in regulatory T-cell stability and function by recruiting the serine-threonine phosphatase catalytic subunit (PPP2CA) to the lysosome, thereby facilitating the interaction of PP2Ac with the mTORC1 component RPTOR and restricting glycolytic metabolism. Positively regulates TLR4 signaling activity in macrophage-mediated inflammation by acting as a molecular clamp to facilitate LPS-induced translocation of TLR4 to lipid rafts. In response to viral infection, facilitates the recruitment of TRAF3 to MAVS within mitochondria leading to IRF3 activation and interferon production. However, participates in the maintenance of immune homeostasis and the prevention of overzealous innate immunity by promoting 'Lys-48'-dependent ubiquitination of TBK1. The chain is TRAF3-interacting JNK-activating modulator (TRAF3IP3) from Homo sapiens (Human).